The sequence spans 498 residues: Polyphosphate:AMP phosphotransferase (498 aa).

PPK2 stretches follow at residues 11–234 and 269–491; these read IDDD…MQAA and LSKE…LEKA.

This sequence belongs to the polyphosphate kinase 2 (PPK2) family. Class II subfamily.

It carries out the reaction [phosphate](n) + ADP = [phosphate](n+1) + AMP. Its function is as follows. Uses inorganic polyphosphate (polyP) as a donor to convert AMP to ADP. Can also convert GMP to GDP, with lower efficiency. This is Polyphosphate:AMP phosphotransferase from Pseudomonas syringae pv. tomato (strain ATCC BAA-871 / DC3000).